Reading from the N-terminus, the 631-residue chain is Quinoprotein alcohol dehydrogenase PedE (631 aa).

An N-terminal signal peptide occupies residues 1 to 33 (MTIRSLPALSPLALSVRVLLMAGSLALGNVATA). The Ca(2+) site is built by Asp-53, Thr-56, and Asp-59. Glu-103 contacts pyrroloquinoline quinone. A disulfide bridge connects residues Cys-147 and Cys-148. Residues Arg-153, Thr-197, and 215-217 (HGS) each bind pyrroloquinoline quinone. Glu-221 is a binding site for Ca(2+). Positions 250-286 (GRLNGKDSTPTGDVKAPSWPDDPTTETGKVEAWSHGG) are disordered. Residues Asn-308 and Asp-358 each contribute to the Ca(2+) site. Catalysis depends on Asp-358, which acts as the Proton acceptor. Arg-386 contributes to the pyrroloquinoline quinone binding site. A disordered region spans residues 421–443 (GRPVENPGQRPAKPLPGETKGKP). Pyrroloquinoline quinone-binding residues include Trp-531 and Ala-595.

Belongs to the bacterial PQQ dehydrogenase family. Homodimer. Interacts with cytochrome c550. Pyrroloquinoline quinone serves as cofactor. Ca(2+) is required as a cofactor. The disulfide ring formed between the two adjacent cysteine residues Cys-147 and Cys-148 is essential for efficient electron transfer at pH 7 from PedE to its natural electron acceptor cytochrome c550.

It localises to the periplasm. The catalysed reaction is a primary alcohol + 2 Fe(III)-[cytochrome c] = an aldehyde + 2 Fe(II)-[cytochrome c] + 2 H(+). It catalyses the reaction ethanol + 2 Fe(III)-[cytochrome c] = acetaldehyde + 2 Fe(II)-[cytochrome c] + 2 H(+). The enzyme catalyses butan-1-ol + 2 Fe(III)-[cytochrome c] = butanal + 2 Fe(II)-[cytochrome c] + 2 H(+). It carries out the reaction butan-2-ol + 2 Fe(III)-[cytochrome c] = butan-2-one + 2 Fe(II)-[cytochrome c] + 2 H(+). The catalysed reaction is 2-phenylethanol + 2 Fe(III)-[cytochrome c] = 2-phenylacetaldehyde + 2 Fe(II)-[cytochrome c] + 2 H(+). It catalyses the reaction octan-1-ol + 2 Fe(III)-[cytochrome c] = octanal + 2 Fe(II)-[cytochrome c] + 2 H(+). The enzyme catalyses hexan-1-ol + 2 Fe(III)-[cytochrome c] = hexanal + 2 Fe(II)-[cytochrome c] + 2 H(+). It carries out the reaction cinnamyl alcohol + 2 Fe(III)-[cytochrome c] = cinnamaldehyde + 2 Fe(II)-[cytochrome c] + 2 H(+). The catalysed reaction is farnesol + 2 Fe(III)-[cytochrome c] = farnesal + 2 Fe(II)-[cytochrome c] + 2 H(+). It catalyses the reaction an aldehyde + 2 Fe(III)-[cytochrome c] + H2O = a carboxylate + 2 Fe(II)-[cytochrome c] + 3 H(+). The enzyme catalyses acetaldehyde + 2 Fe(III)-[cytochrome c] + H2O = 2 Fe(II)-[cytochrome c] + acetate + 3 H(+). It carries out the reaction butanal + 2 Fe(III)-[cytochrome c] + H2O = butanoate + 2 Fe(II)-[cytochrome c] + 3 H(+). The catalysed reaction is hexanal + 2 Fe(III)-[cytochrome c] + H2O = hexanoate + 2 Fe(II)-[cytochrome c] + 3 H(+). It catalyses the reaction octanal + 2 Fe(III)-[cytochrome c] + H2O = octanoate + 2 Fe(II)-[cytochrome c] + 3 H(+). In terms of biological role, alcohol dehydrogenase that catalyzes the oxidation of a range of substrates, including linear and aromatic primary and secondary alcohols, as well as aldehydes, allowing bacterial growth with a variety of volatile organic compounds (VOCs) as carbon and energy sources. Uses a specific inducible cytochrome c550, encoded by the adjacent gene in the locus, as electron acceptor. The chain is Quinoprotein alcohol dehydrogenase PedE from Pseudomonas putida (strain ATCC 47054 / DSM 6125 / CFBP 8728 / NCIMB 11950 / KT2440).